Consider the following 165-residue polypeptide: Large ribosomal subunit protein uL11 (165 aa).

At S38 the chain carries Phosphoserine. A Glycyl lysine isopeptide (Lys-Gly) (interchain with G-Cter in SUMO2) cross-link involves residue K40. Residue K48 forms a Glycyl lysine isopeptide (Lys-Gly) (interchain with G-Cter in ubiquitin) linkage. At K54 the chain carries N6-acetyllysine. Residue K83 forms a Glycyl lysine isopeptide (Lys-Gly) (interchain with G-Cter in ubiquitin) linkage. At S165 the chain carries Phosphoserine.

Belongs to the universal ribosomal protein uL11 family. In terms of assembly, component of the large ribosomal subunit. Mature ribosomes consist of a small (40S) and a large (60S) subunit. The 40S subunit contains about 33 different proteins and 1 molecule of RNA (18S). The 60S subunit contains about 49 different proteins and 3 molecules of RNA (28S, 5.8S and 5S). Ubiquitinated at Lys-48 and Lys-83 by RNF14 and RNF25 in response to ribosome collisions (ribosome stalling).

The protein localises to the cytoplasm. In terms of biological role, component of the large ribosomal subunit. The ribosome is a large ribonucleoprotein complex responsible for the synthesis of proteins in the cell. Binds directly to 26S ribosomal RNA. The chain is Large ribosomal subunit protein uL11 (Rpl12) from Mus musculus (Mouse).